The chain runs to 278 residues: OX-2 membrane glycoprotein (278 aa).

A signal peptide spans 1–30; the sequence is MERLVIRMPFSHLSTYSLVWVMAAVVLCTA. In terms of domain architecture, Ig-like V-type spans 31–141; it reads QVQVVTQDER…SGTACLTVYV (111 aa). Residues 31–232 lie on the Extracellular side of the membrane; the sequence is QVQVVTQDER…TDFKQTVNKG (202 aa). Disulfide bonds link C51/C121 and C118/C136. N95, N103, and N110 each carry an N-linked (GlcNAc...) asparagine glycan. Residues 142-232 enclose the Ig-like C2-type domain; the sequence is QPIVSLHYKF…TDFKQTVNKG (91 aa). N-linked (GlcNAc...) asparagine glycans are attached at residues N157, N181, and N190. C160 and C214 are disulfide-bonded. The chain crosses the membrane as a helical span at residues 233–259; it reads YWFSVPLLLSIVSLVILLVLISILLYW. The Cytoplasmic segment spans residues 260–278; that stretch reads KRHRNQDRGELSQGVQKMT.

In terms of assembly, CD200 and CD200R1 interact via their respective N-terminal Ig-like domains.

The protein resides in the cell membrane. Its function is as follows. Costimulates T-cell proliferation. May regulate myeloid cell activity in a variety of tissues. In Homo sapiens (Human), this protein is OX-2 membrane glycoprotein (CD200).